Here is an 87-residue protein sequence, read N- to C-terminus: MKSFMVFVLIFACFSCYYAQESTNFYCGRTLSRALAVLCYGAESKRDAGWWIPQHGHHALAGVRGKRGPVDECCEKACSIQELMTYC.

The N-terminal stretch at 1 to 19 (MKSFMVFVLIFACFSCYYA) is a signal peptide. Positions 20–44 (QESTNFYCGRTLSRALAVLCYGAES) are excised as a propeptide. Residue R64 is modified to Arginine amide. Positions 68-87 (GPVDECCEKACSIQELMTYC) are excised as a propeptide.

It belongs to the insulin family. DAGWWIPQHGHHALAGVR-amide: Expressed in corpora cardiaca (CC), corpora allata (CA), antennal lobe (AL) and gnathal ganglion (GNG) (at protein level). Expression in CC and CA detected in most animals, in AL and GNG in few animals (at protein level).

It is found in the secreted. The chain is Insulin-related peptide 1 from Agrotis ipsilon (Black cutworm moth).